Reading from the N-terminus, the 167-residue chain is Putative defense protein Hdd11-like (167 aa).

The N-terminal stretch at M1–A18 is a signal peptide. The Reelin domain occupies Y19–H167. A disulfide bridge links C28 with C105.

It belongs to the insect defense protein family. In larvae, high expression in the fat body and low expression in midgut, hemocytes and malpighian tubules. No expression in silkgland.

The protein resides in the secreted. In terms of biological role, may have antimicrobial activity. The sequence is that of Putative defense protein Hdd11-like from Samia ricini (Indian eri silkmoth).